A 389-amino-acid polypeptide reads, in one-letter code: MLESTALFSATTIHLDRLMCAFNCMTPFGQRDDVLITIDRDGLTFIRQNNHAAEIQLFLAKELFQYYSIREGFEGEIQLCMKLNHLLDTVSVANRDKDDVVECTLSYDGEGTPFMLILEDSMITEQVEYATYLVGEMDRTGLELDRARLEFECILKGDVLYSALRDLREIGCKECYLYIVTSSRARPMFALVSRGQLGLSKIILPSERSVLEKLEVYENDSTTLIHDAPVIGLFDFAALDKLRPSTKIASKVLIRKDVHGLLAVNILSDTNAILVPEKRELIRASRSVSAEYPTVVIEVFLLEKASVGDIDVRDVHQLMLTSPAHRRSGFADSGSRIVSVTPTATSAAHTGAGSLLGLAPPSAFPAEETQDPDESYHPAPSNTDIPLFL.

Residues 358 to 389 (LAPPSAFPAEETQDPDESYHPAPSNTDIPLFL) form a disordered region. Residues 380 to 389 (PSNTDIPLFL) show a composition bias toward polar residues.

It belongs to the rad1 family. In terms of assembly, component of the checkpoint clamp complex composed of DDC1, MEC3 and RAD17.

Its subcellular location is the nucleus. Its function is as follows. Component of the checkpoint clamp complex involved in the surveillance mechanism that allows the DNA repair pathways to act to restore the integrity of the DNA prior to DNA synthesis or separation of the replicated chromosomes. The chain is DNA damage checkpoint control protein RAD17 (RAD17) from Eremothecium gossypii (strain ATCC 10895 / CBS 109.51 / FGSC 9923 / NRRL Y-1056) (Yeast).